The chain runs to 224 residues: Protein GrpE (224 aa).

Residues 27 to 77 are disordered; the sequence is NQASEDIDQENQSEVVDDTTENEDASEEVYEEDTASEDGSKEKKSFFKKKE. Residues 31–62 show a composition bias toward acidic residues; that stretch reads EDIDQENQSEVVDDTTENEDASEEVYEEDTAS.

It belongs to the GrpE family. In terms of assembly, homodimer.

It localises to the cytoplasm. Participates actively in the response to hyperosmotic and heat shock by preventing the aggregation of stress-denatured proteins, in association with DnaK and GrpE. It is the nucleotide exchange factor for DnaK and may function as a thermosensor. Unfolded proteins bind initially to DnaJ; upon interaction with the DnaJ-bound protein, DnaK hydrolyzes its bound ATP, resulting in the formation of a stable complex. GrpE releases ADP from DnaK; ATP binding to DnaK triggers the release of the substrate protein, thus completing the reaction cycle. Several rounds of ATP-dependent interactions between DnaJ, DnaK and GrpE are required for fully efficient folding. The sequence is that of Protein GrpE from Lachnoclostridium phytofermentans (strain ATCC 700394 / DSM 18823 / ISDg) (Clostridium phytofermentans).